The chain runs to 214 residues: Calcineurin B homologous protein 3 (214 aa).

A lipid anchor (N-myristoyl glycine) is attached at Gly-2. An EF-hand domain is found at 110 to 145 (CRKDKLRFLFNMYDTDNDSKITLEEYRKVVEELLSG). Positions 123, 125, 127, 129, and 134 each coordinate Ca(2+).

This sequence belongs to the calcineurin regulatory subunit family. CHP subfamily. Monomer. Homodimer.

It localises to the nucleus. The protein resides in the cytoplasm. The protein localises to the membrane. It is found in the cell membrane. Its subcellular location is the cell projection. It localises to the lamellipodium. The protein resides in the ruffle membrane. In terms of biological role, functions as an integral cofactor in cell pH regulation by controlling plasma membrane-type Na(+)/H(+) exchange activity. Promotes the induction of hematopoietic stem cell differentiation toward megakaryocytic lineage. Essential for the coupling of ERK cascade activation with the expression of ETS family genes in megakaryocytic differentiation. Also involved in granulocytic differentiation in a ERK-dependent manner. Inhibits the phosphatase activity of calcineurin. The chain is Calcineurin B homologous protein 3 (tesc) from Xenopus tropicalis (Western clawed frog).